The sequence spans 414 residues: DNA primase small subunit PriS (414 aa).

Catalysis depends on residues Asp98, Asp100, and Asp312.

The protein belongs to the eukaryotic-type primase small subunit family. Heterodimer of a small subunit (PriS) and a large subunit (PriL). Mg(2+) is required as a cofactor. Requires Mn(2+) as cofactor.

Functionally, catalytic subunit of DNA primase, an RNA polymerase that catalyzes the synthesis of short RNA molecules used as primers for DNA polymerase during DNA replication. The small subunit contains the primase catalytic core and has DNA synthesis activity on its own. Binding to the large subunit stabilizes and modulates the activity, increasing the rate of DNA synthesis while decreasing the length of the DNA fragments, and conferring RNA synthesis capability. The DNA polymerase activity may enable DNA primase to also catalyze primer extension after primer synthesis. May also play a role in DNA repair. This is DNA primase small subunit PriS from Methanosarcina mazei (strain ATCC BAA-159 / DSM 3647 / Goe1 / Go1 / JCM 11833 / OCM 88) (Methanosarcina frisia).